The primary structure comprises 585 residues: Putative phospholipase B-like 2 (585 aa).

The signal sequence occupies residues 1–35 (MAAPMDRTHGGRAARALRRALALASLAGLLLSGLA). N84, N102, and N106 each carry an N-linked (GlcNAc...) asparagine glycan. A disulfide bridge links C138 with C148. N-linked (GlcNAc...) asparagine glycans are attached at residues N227 and N432. Residues C488 and C491 are joined by a disulfide bond. N-linked (GlcNAc...) asparagine glycosylation occurs at N511.

This sequence belongs to the phospholipase B-like family. In terms of assembly, interacts with IGF2R. In terms of processing, glycosylated; contains mannose 6-phosphate sugars.

The protein resides in the lysosome lumen. Putative phospholipase. The protein is Putative phospholipase B-like 2 (Plbd2) of Rattus norvegicus (Rat).